Here is a 314-residue protein sequence, read N- to C-terminus: 4-hydroxy-3-methylbut-2-enyl diphosphate reductase (314 aa).

C18 contributes to the [4Fe-4S] cluster binding site. Residues H47 and H80 each coordinate (2E)-4-hydroxy-3-methylbut-2-enyl diphosphate. The dimethylallyl diphosphate site is built by H47 and H80. Isopentenyl diphosphate contacts are provided by H47 and H80. C102 is a [4Fe-4S] cluster binding site. Residue H130 participates in (2E)-4-hydroxy-3-methylbut-2-enyl diphosphate binding. H130 contacts dimethylallyl diphosphate. H130 contacts isopentenyl diphosphate. The active-site Proton donor is E132. T171 is a binding site for (2E)-4-hydroxy-3-methylbut-2-enyl diphosphate. C201 provides a ligand contact to [4Fe-4S] cluster. 4 residues coordinate (2E)-4-hydroxy-3-methylbut-2-enyl diphosphate: S229, S230, N231, and S273. The dimethylallyl diphosphate site is built by S229, S230, N231, and S273. Isopentenyl diphosphate-binding residues include S229, S230, N231, and S273.

The protein belongs to the IspH family. [4Fe-4S] cluster serves as cofactor.

The catalysed reaction is isopentenyl diphosphate + 2 oxidized [2Fe-2S]-[ferredoxin] + H2O = (2E)-4-hydroxy-3-methylbut-2-enyl diphosphate + 2 reduced [2Fe-2S]-[ferredoxin] + 2 H(+). It carries out the reaction dimethylallyl diphosphate + 2 oxidized [2Fe-2S]-[ferredoxin] + H2O = (2E)-4-hydroxy-3-methylbut-2-enyl diphosphate + 2 reduced [2Fe-2S]-[ferredoxin] + 2 H(+). Its pathway is isoprenoid biosynthesis; dimethylallyl diphosphate biosynthesis; dimethylallyl diphosphate from (2E)-4-hydroxy-3-methylbutenyl diphosphate: step 1/1. The protein operates within isoprenoid biosynthesis; isopentenyl diphosphate biosynthesis via DXP pathway; isopentenyl diphosphate from 1-deoxy-D-xylulose 5-phosphate: step 6/6. Catalyzes the conversion of 1-hydroxy-2-methyl-2-(E)-butenyl 4-diphosphate (HMBPP) into a mixture of isopentenyl diphosphate (IPP) and dimethylallyl diphosphate (DMAPP). Acts in the terminal step of the DOXP/MEP pathway for isoprenoid precursor biosynthesis. In Phenylobacterium zucineum (strain HLK1), this protein is 4-hydroxy-3-methylbut-2-enyl diphosphate reductase.